Reading from the N-terminus, the 96-residue chain is Small ribosomal subunit protein bS6 (96 aa).

It belongs to the bacterial ribosomal protein bS6 family.

Its function is as follows. Binds together with bS18 to 16S ribosomal RNA. In Streptococcus pneumoniae serotype 2 (strain D39 / NCTC 7466), this protein is Small ribosomal subunit protein bS6.